A 492-amino-acid chain; its full sequence is 3-octaprenyl-4-hydroxybenzoate carboxy-lyase (492 aa).

Asn-175 contributes to the Mn(2+) binding site. Residues 178–180 (IYR), 192–194 (RWL), and 197–198 (RG) contribute to the prenylated FMN site. Residue Glu-241 coordinates Mn(2+). The active-site Proton donor is Asp-290.

The protein belongs to the UbiD family. Homohexamer. Prenylated FMN is required as a cofactor. Mn(2+) serves as cofactor.

Its subcellular location is the cell membrane. It catalyses the reaction a 4-hydroxy-3-(all-trans-polyprenyl)benzoate + H(+) = a 2-(all-trans-polyprenyl)phenol + CO2. It functions in the pathway cofactor biosynthesis; ubiquinone biosynthesis. In terms of biological role, catalyzes the decarboxylation of 3-octaprenyl-4-hydroxy benzoate to 2-octaprenylphenol, an intermediate step in ubiquinone biosynthesis. This is 3-octaprenyl-4-hydroxybenzoate carboxy-lyase from Salmonella typhi.